The sequence spans 252 residues: Phosphomannomutase (252 aa).

Catalysis depends on aspartate 13, which acts as the Nucleophile. Residues aspartate 13 and aspartate 15 each coordinate Mg(2+). Residue aspartate 15 is the Proton donor/acceptor of the active site. Residues arginine 22, arginine 124, arginine 135, arginine 142, serine 180, and aspartate 182 each coordinate alpha-D-mannose 1-phosphate. Residues aspartate 208, tyrosine 220, and threonine 225 each coordinate Mg(2+).

It belongs to the eukaryotic PMM family. Homodimer. Mg(2+) is required as a cofactor. As to expression, expressed in roots, leaves, stems and flowers.

The protein resides in the cytoplasm. It carries out the reaction alpha-D-mannose 1-phosphate = D-mannose 6-phosphate. Its pathway is nucleotide-sugar biosynthesis; GDP-alpha-D-mannose biosynthesis; alpha-D-mannose 1-phosphate from D-fructose 6-phosphate: step 2/2. In terms of biological role, catalyzes the interconversion of mannose-6-phosphate to mannose-1-phosphate, the precursor for the synthesis of GDP-mannose. GDP-mannose is an essential sugar nucleotide for the synthesis of D-mannose-containing cell wall polysaccharides (galactomannans and glucomannans), glycolipids, glycoproteins and the antioxidant L-ascorbate. Involved in the biosynthesis of ascorbate and polysaccharides in response to abiotic stress during seed germination. This Dendrobium officinale (Orchid) protein is Phosphomannomutase.